Reading from the N-terminus, the 454-residue chain is tRNA modification GTPase MnmE (454 aa).

(6S)-5-formyl-5,6,7,8-tetrahydrofolate-binding residues include Arg-26, Glu-84, and Lys-123. In terms of domain architecture, TrmE-type G spans 219-378; that stretch reads GLQVVIAGKP…LVDAITAHAG (160 aa). Asn-229 provides a ligand contact to K(+). GTP contacts are provided by residues 229–234, 248–254, and 273–276; these read NAGKSS, TDIAGTT, and DTAG. Ser-233 provides a ligand contact to Mg(2+). K(+) is bound by residues Thr-248, Ile-250, and Thr-253. Thr-254 provides a ligand contact to Mg(2+). Lys-454 is a binding site for (6S)-5-formyl-5,6,7,8-tetrahydrofolate.

Belongs to the TRAFAC class TrmE-Era-EngA-EngB-Septin-like GTPase superfamily. TrmE GTPase family. In terms of assembly, homodimer. Heterotetramer of two MnmE and two MnmG subunits. The cofactor is K(+).

The protein localises to the cytoplasm. Functionally, exhibits a very high intrinsic GTPase hydrolysis rate. Involved in the addition of a carboxymethylaminomethyl (cmnm) group at the wobble position (U34) of certain tRNAs, forming tRNA-cmnm(5)s(2)U34. In Acinetobacter baumannii (strain AYE), this protein is tRNA modification GTPase MnmE.